We begin with the raw amino-acid sequence, 64 residues long: MPKMKTNRGAAKRFKVKKSGKIKRGAAYRSHILTKKSQKRKRNLRAPKYVDSTNIKAVRELLAI.

The interval 1 to 21 (MPKMKTNRGAAKRFKVKKSGK) is disordered. Over residues 10–21 (AAKRFKVKKSGK) the composition is skewed to basic residues.

This sequence belongs to the bacterial ribosomal protein bL35 family.

In Nautilia profundicola (strain ATCC BAA-1463 / DSM 18972 / AmH), this protein is Large ribosomal subunit protein bL35.